The sequence spans 109 residues: MMTDTQLFEYLYFSPKTIKNKLVNHFEILAKNNILSEFYPKQYKLQKGVFKGCRVLCTAPNARLMNKIPYFTMEFIDGPFKGLITQSLMAYDSEPFLIKEQSWINLFSN.

This is an uncharacterized protein from Enterobacteria phage T4 (Bacteriophage T4).